Consider the following 73-residue polypeptide: IGMVIECKDGYLMEPNGCKRGCLTRPARYCANECSRVKGTDGYCYAWLACYCYNMPNWVKTWDRATNTCGRGK.

Residues 1–7 (IGMVIEC) form the signal peptide. An LCN-type CS-alpha/beta domain is found at 8–70 (KDGYLMEPNG…TWDRATNTCG (63 aa)). Intrachain disulfides connect cysteine 18–cysteine 69, cysteine 22–cysteine 44, cysteine 30–cysteine 50, and cysteine 34–cysteine 52. The residue at position 71 (arginine 71) is an Arginine amide.

Belongs to the long (4 C-C) scorpion toxin superfamily. Sodium channel inhibitor family. Beta subfamily. Expressed by the venom gland.

Its subcellular location is the secreted. Beta toxins bind voltage-independently at site-4 of sodium channels (Nav) and shift the voltage of activation toward more negative potentials thereby affecting sodium channel activation and promoting spontaneous and repetitive firing. The polypeptide is Toxin Td12 (Tityus discrepans (Venezuelan scorpion)).